The sequence spans 322 residues: Undecaprenyl-phosphate 4-deoxy-4-formamido-L-arabinose transferase (322 aa).

Residues 1–235 (MFEIHPVKKV…TCLTTTPLRM (235 aa)) are Cytoplasmic-facing. A helical membrane pass occupies residues 236-256 (LSLLGSIIAIGGFSIAVLLVI). Residues 257-269 (LRLTFGPQWAAEG) lie on the Periplasmic side of the membrane. The chain crosses the membrane as a helical span at residues 270–290 (VFMLFAVLFTFIGAQFIGMGL). Residues 291 to 322 (LGEYIGRIYTDVRARPRYFVQQVIRPSSKENE) lie on the Cytoplasmic side of the membrane.

It belongs to the glycosyltransferase 2 family.

It localises to the cell inner membrane. The catalysed reaction is UDP-4-deoxy-4-formamido-beta-L-arabinose + di-trans,octa-cis-undecaprenyl phosphate = 4-deoxy-4-formamido-alpha-L-arabinopyranosyl di-trans,octa-cis-undecaprenyl phosphate + UDP. Its pathway is glycolipid biosynthesis; 4-amino-4-deoxy-alpha-L-arabinose undecaprenyl phosphate biosynthesis; 4-amino-4-deoxy-alpha-L-arabinose undecaprenyl phosphate from UDP-4-deoxy-4-formamido-beta-L-arabinose and undecaprenyl phosphate: step 1/2. The protein operates within bacterial outer membrane biogenesis; lipopolysaccharide biosynthesis. In terms of biological role, catalyzes the transfer of 4-deoxy-4-formamido-L-arabinose from UDP to undecaprenyl phosphate. The modified arabinose is attached to lipid A and is required for resistance to polymyxin and cationic antimicrobial peptides. This is Undecaprenyl-phosphate 4-deoxy-4-formamido-L-arabinose transferase from Escherichia coli O157:H7 (strain EC4115 / EHEC).